Here is a 176-residue protein sequence, read N- to C-terminus: Ribosome maturation factor RimM (176 aa).

The region spanning 93-172 (KDEFFQFDII…EILVKGARDI (80 aa)) is the PRC barrel domain.

This sequence belongs to the RimM family. In terms of assembly, binds ribosomal protein uS19.

Its subcellular location is the cytoplasm. Functionally, an accessory protein needed during the final step in the assembly of 30S ribosomal subunit, possibly for assembly of the head region. Essential for efficient processing of 16S rRNA. May be needed both before and after RbfA during the maturation of 16S rRNA. It has affinity for free ribosomal 30S subunits but not for 70S ribosomes. The protein is Ribosome maturation factor RimM of Campylobacter concisus (strain 13826).